We begin with the raw amino-acid sequence, 492 residues long: N-succinylglutamate 5-semialdehyde dehydrogenase (492 aa).

220 to 225 (GSANTG) contributes to the NAD(+) binding site. Catalysis depends on residues glutamate 243 and cysteine 277.

The protein belongs to the aldehyde dehydrogenase family. AstD subfamily.

The enzyme catalyses N-succinyl-L-glutamate 5-semialdehyde + NAD(+) + H2O = N-succinyl-L-glutamate + NADH + 2 H(+). Its pathway is amino-acid degradation; L-arginine degradation via AST pathway; L-glutamate and succinate from L-arginine: step 4/5. Its function is as follows. Catalyzes the NAD-dependent reduction of succinylglutamate semialdehyde into succinylglutamate. This is N-succinylglutamate 5-semialdehyde dehydrogenase from Escherichia coli (strain UTI89 / UPEC).